Here is a 208-residue protein sequence, read N- to C-terminus: Outer-membrane lipoprotein carrier protein (208 aa).

The first 21 residues, 1–21 (MRLIRTLFVAALAMGTSLAHA), serve as a signal peptide directing secretion.

The protein belongs to the LolA family. As to quaternary structure, monomer.

The protein resides in the periplasm. Its function is as follows. Participates in the translocation of lipoproteins from the inner membrane to the outer membrane. Only forms a complex with a lipoprotein if the residue after the N-terminal Cys is not an aspartate (The Asp acts as a targeting signal to indicate that the lipoprotein should stay in the inner membrane). This is Outer-membrane lipoprotein carrier protein from Pseudomonas paraeruginosa (strain DSM 24068 / PA7) (Pseudomonas aeruginosa (strain PA7)).